Here is a 178-residue protein sequence, read N- to C-terminus: Bifunctional protein PyrR (178 aa).

Positions 99 to 111 match the PRPP-binding motif; that stretch reads VILVDDVLFTGRT.

The protein belongs to the purine/pyrimidine phosphoribosyltransferase family. PyrR subfamily. Homodimer and homohexamer; in equilibrium.

It carries out the reaction UMP + diphosphate = 5-phospho-alpha-D-ribose 1-diphosphate + uracil. Functionally, regulates transcriptional attenuation of the pyrimidine nucleotide (pyr) operon by binding in a uridine-dependent manner to specific sites on pyr mRNA. This disrupts an antiterminator hairpin in the RNA and favors formation of a downstream transcription terminator, leading to a reduced expression of downstream genes. In terms of biological role, also displays a weak uracil phosphoribosyltransferase activity which is not physiologically significant. This is Bifunctional protein PyrR from Limosilactobacillus reuteri subsp. reuteri (strain JCM 1112) (Lactobacillus reuteri).